Consider the following 295-residue polypeptide: Aquaporin-9 (295 aa).

The Cytoplasmic segment spans residues 1-24 (MQPEGAEKGKSFKQRLVLKSSLAK). The helical transmembrane segment at 25–43 (ETLSEFLGTFILIVLGCGC) threads the bilayer. The Extracellular portion of the chain corresponds to 44–57 (VAQAILSRGRFGGV). The helical transmembrane segment at 58–77 (ITINVGFSMAVAMAIYVAGG) threads the bilayer. The Cytoplasmic segment spans residues 78–79 (VS). Residues 80 to 92 (GGHINPAVSLAMC) constitute an intramembrane region (discontinuously helical). Positions 84–86 (NPA) match the NPA 1 motif. Topologically, residues 93–98 (LFGRMK) are cytoplasmic. The chain crosses the membrane as a helical span at residues 99-123 (WFKLPFYVGAQFLGAFVGAATVFGI). The Extracellular portion of the chain corresponds to 124-160 (YYDGLMSFAGGKLLIVGENATAHIFATYPAPYLSLAN). The chain crosses the membrane as a helical span at residues 161 to 178 (AFADQVVATMILLIIVFA). The Cytoplasmic segment spans residues 179–190 (IFDSRNLGAPRG). A helical membrane pass occupies residues 191–207 (LEPIAIGLLIIVIASSL). The Extracellular portion of the chain corresponds to 208–210 (GLN). The discontinuously helical intramembrane region spans 211–225 (SGCAMNPARDLSPRL). The NPA 2 motif lies at 216 to 218 (NPA). Over 226-243 (FTALAGWGFEVFRAGNNF) the chain is Extracellular. The helical transmembrane segment at 244–264 (WWIPVVGPLVGAVIGGLIYVL) threads the bilayer. Residues 265–295 (VIEIHHPEPDSVFKTEQSEDKPEKYELSVIM) lie on the Cytoplasmic side of the membrane.

Belongs to the MIP/aquaporin (TC 1.A.8) family. In terms of assembly, homotetramer; each monomer provides an independent glycerol/water pore. In terms of tissue distribution, highly expressed in peripheral leukocytes. Also expressed in liver, lung, and spleen.

The protein localises to the cell membrane. It is found in the basolateral cell membrane. It catalyses the reaction glycerol(in) = glycerol(out). The catalysed reaction is H2O(in) = H2O(out). The enzyme catalyses urea(in) = urea(out). It carries out the reaction (S)-lactate(in) = (S)-lactate(out). It catalyses the reaction NH4(+)(in) = NH4(+)(out). The catalysed reaction is uracil(in) = uracil(out). The enzyme catalyses adenine(out) = adenine(in). It carries out the reaction 3-hydroxybutanoate(in) = 3-hydroxybutanoate(out). It catalyses the reaction D-sorbitol(in) = D-sorbitol(out). The catalysed reaction is D-mannitol(in) = D-mannitol(out). The enzyme catalyses H2O2(out) = H2O2(in). It carries out the reaction arsenite(in) = arsenite(out). It catalyses the reaction selenite(in) = selenite(out). Aquaglyceroporins form homotetrameric transmembrane channels, with each monomer independently mediating glycerol and water transport across the plasma membrane along their osmotic gradient. AQP9 is the primary route for glycerol uptake in hepatocytes, supporting hepatic gluconeogenesis. It exhibits broad specificity and may transport various small, non-charged solutes, including carbamides, polyols, purines, and pyrimidines. AQP9 may also facilitate hepatic urea extrusion. Due to its permeability to lactate, AQP9 might participate in the astrocyte-to-neuron lactate shuttle, supplying neurons with energy. Additionally, AQP9 is permeable to arsenite, contributing to arsenic excretion by the liver and providing partial protection against arsenic toxicity. It is also permeable to H2O2 in vivo. Could also be permeable to ammonium. This is Aquaporin-9 from Homo sapiens (Human).